The sequence spans 869 residues: DNA mismatch repair protein MutS (869 aa).

Residue 602 to 609 (GPNMSGKS) coordinates ATP.

It belongs to the DNA mismatch repair MutS family.

Functionally, this protein is involved in the repair of mismatches in DNA. It is possible that it carries out the mismatch recognition step. This protein has a weak ATPase activity. The chain is DNA mismatch repair protein MutS from Staphylococcus carnosus (strain TM300).